A 420-amino-acid chain; its full sequence is Type II methyltransferase M.HgiCI (420 aa).

In terms of domain architecture, SAM-dependent MTase C5-type spans 2–417 (LKFIDLFAGI…LDLFKSADLA (416 aa)). Cys75 is an active-site residue.

The protein belongs to the class I-like SAM-binding methyltransferase superfamily. C5-methyltransferase family.

The enzyme catalyses a 2'-deoxycytidine in DNA + S-adenosyl-L-methionine = a 5-methyl-2'-deoxycytidine in DNA + S-adenosyl-L-homocysteine + H(+). Its function is as follows. A methylase that recognizes the double-stranded sequence 5'-GGYRCC-3', methylates C-5 on both strands, and protects the DNA from cleavage by the HgiCI endonuclease. The protein is Type II methyltransferase M.HgiCI (hgiCIM) of Herpetosiphon aurantiacus (Herpetosiphon giganteus).